The chain runs to 148 residues: MRTYTPLIYNIYNVHIWVFTESQGQIGQMSPRGKMETAVSQGQHKQLKDGHQHKGRKLSEEIASLLRLKECRRLNPASYYTPRRTSQSQSLSGSTFKEYNEYVNEKDSSRAQRQNAAAVLSKLAHDFWENDCVIDEDIFEDSSDEEQS.

A phosphoserine mark is found at Ser59 and Ser86.

The protein resides in the cytoplasmic granule. The protein localises to the cytoplasm. Putative cyclin-dependent kinase (CDK) inhibitor necessary and sufficient for PHO pathway-dependent down-regulation of low-affinity phosphate transport. The polypeptide is Putative cyclin-dependent kinase inhibitor SPL2 (SPL2) (Saccharomyces cerevisiae (strain YJM789) (Baker's yeast)).